We begin with the raw amino-acid sequence, 188 residues long: UPF0301 protein CPn_0139/CP_0633/CPj0139/CpB0140 (188 aa).

Belongs to the UPF0301 (AlgH) family.

The protein is UPF0301 protein CPn_0139/CP_0633/CPj0139/CpB0140 of Chlamydia pneumoniae (Chlamydophila pneumoniae).